A 253-amino-acid chain; its full sequence is PAXIP1-associated glutamate-rich protein 1A (253 aa).

2 disordered regions span residues 1–108 (MSLA…MPPP) and 126–253 (LQAE…QRKY). Positions 45-66 (KAEEEGKGSQEEAGREGSRPEE) are enriched in basic and acidic residues. A sufficient for interaction with NCOA1 region spans residues 115-159 (YELLATQGTLELQAEILPRRPPTPEAQSEEERSDEEPEAKEEEEE). Thr137 bears the Phosphothreonine mark. The segment covering 141–158 (QSEEERSDEEPEAKEEEE) has biased composition (acidic residues). 2 positions are modified to phosphoserine: Ser142 and Ser147. The interval 160–253 (KPHMPTEFDF…NSLFPRQRKY (94 aa)) is sufficient for interaction with ESR1. Positions 194–222 (QKREARLDKVLSDMKRHKKLEEQILRTGR) are enriched in basic and acidic residues. Ser236 is modified (phosphoserine). A compositionally biased stretch (polar residues) spans 238–247 (PLRSSGNSLF).

Component of the KMT2 family MLL2/MLL3 complex, at least composed of the histone methyltransferases KMT2D and/or KMT2C, the common subunits ASH2L, RBBP5, WDR5 and DPY30, and the complex type-specific subunits PAXIP1/PTIP, PAGR1, NCOA6 and KDM6A; PAXIP1 is required for the association with the MLL2/MLL3 complex. Forms a constitutive complex with PAXIP1/PTIP independently of the MLL2/MLL3 complex. Interacts with NCOA1, ESR1, NR3C1, AR.

The protein resides in the nucleus. Functionally, its association with the histone methyltransferase MLL2/MLL3 complex is suggesting a role in epigenetic transcriptional activation. However, in association with PAXIP1/PTIP is proposed to function at least in part independently of the MLL2/MLL3 complex. Proposed to be recruited by PAXIP1 to sites of DNA damage where the PAGR1:PAXIP1 complex is required for cell survival in response to DNA damage independently of the MLL2/MLL3 complex. However, its function in DNA damage has been questioned. During immunoglobulin class switching in activated B-cells is involved in transcription regulation of downstream switch regions at the immunoglobulin heavy-chain (Igh) locus independently of the MLL2/MLL3 complex. Involved in both estrogen receptor-regulated gene transcription and estrogen-stimulated G1/S cell-cycle transition. Acts as a transcriptional cofactor for nuclear hormone receptors. Inhibits the induction properties of several steroid receptors such as NR3C1, AR and PPARG; the mechanism of inhibition appears to be gene-dependent. May be involved in the regulation of the BMP pathway in extraembryonic development. The protein is PAXIP1-associated glutamate-rich protein 1A of Mus musculus (Mouse).